A 269-amino-acid polypeptide reads, in one-letter code: Shikimate dehydrogenase (NADP(+)) (269 aa).

Residues 17 to 19 (SKS) and Thr64 each bind shikimate. The Proton acceptor role is filled by Lys68. Glu80 contributes to the NADP(+) binding site. Shikimate-binding residues include Asn89 and Asp105. NADP(+) is bound by residues 130-134 (GAGGA), 154-159 (NRTRAK), and Met213. Tyr215 contacts shikimate. Gly237 lines the NADP(+) pocket.

The protein belongs to the shikimate dehydrogenase family. As to quaternary structure, homodimer.

The catalysed reaction is shikimate + NADP(+) = 3-dehydroshikimate + NADPH + H(+). The protein operates within metabolic intermediate biosynthesis; chorismate biosynthesis; chorismate from D-erythrose 4-phosphate and phosphoenolpyruvate: step 4/7. In terms of biological role, involved in the biosynthesis of the chorismate, which leads to the biosynthesis of aromatic amino acids. Catalyzes the reversible NADPH linked reduction of 3-dehydroshikimate (DHSA) to yield shikimate (SA). The polypeptide is Shikimate dehydrogenase (NADP(+)) (Neisseria lactamica).